A 527-amino-acid chain; its full sequence is Probable feruloyl esterase B-2 (527 aa).

A signal peptide spans 1-19 (MAPIHYLLPIITLGSAALA). Intrachain disulfides connect cysteine 28-cysteine 75 and cysteine 63-cysteine 114. Asparagine 53, asparagine 85, asparagine 98, asparagine 138, and asparagine 180 each carry an N-linked (GlcNAc...) asparagine glycan. 4 disulfides stabilise this stretch: cysteine 187–cysteine 441, cysteine 256–cysteine 273, cysteine 282–cysteine 291, and cysteine 503–cysteine 525. Serine 188 serves as the catalytic Acyl-ester intermediate. 5 residues coordinate Ca(2+): aspartate 257, aspartate 260, alanine 262, aspartate 264, and isoleucine 266. Asparagine 311 and asparagine 355 each carry an N-linked (GlcNAc...) asparagine glycan. Catalysis depends on charge relay system residues aspartate 400 and histidine 440. The N-linked (GlcNAc...) asparagine glycan is linked to asparagine 516.

This sequence belongs to the tannase family.

It is found in the secreted. The enzyme catalyses feruloyl-polysaccharide + H2O = ferulate + polysaccharide.. In terms of biological role, involved in degradation of plant cell walls. Hydrolyzes the feruloyl-arabinose ester bond in arabinoxylans as well as the feruloyl-galactose and feruloyl-arabinose ester bonds in pectin. This chain is Probable feruloyl esterase B-2 (faeB-2), found in Aspergillus terreus (strain NIH 2624 / FGSC A1156).